The sequence spans 470 residues: Ribulose bisphosphate carboxylase large chain (470 aa).

Position 5 is an N6,N6,N6-trimethyllysine (K5). Positions 114 and 164 each coordinate substrate. The Proton acceptor role is filled by K166. Position 168 (K168) interacts with substrate. K192, D194, and E195 together coordinate Mg(2+). K192 bears the N6-carboxylysine mark. H285 serves as the catalytic Proton acceptor. R286, H318, and S370 together coordinate substrate.

Belongs to the RuBisCO large chain family. Type I subfamily. Heterohexadecamer of 8 large chains and 8 small chains; disulfide-linked. The disulfide link is formed within the large subunit homodimers. Requires Mg(2+) as cofactor. The disulfide bond which can form in the large chain dimeric partners within the hexadecamer appears to be associated with oxidative stress and protein turnover.

It localises to the plastid. Its subcellular location is the chloroplast. It carries out the reaction 2 (2R)-3-phosphoglycerate + 2 H(+) = D-ribulose 1,5-bisphosphate + CO2 + H2O. It catalyses the reaction D-ribulose 1,5-bisphosphate + O2 = 2-phosphoglycolate + (2R)-3-phosphoglycerate + 2 H(+). Its function is as follows. RuBisCO catalyzes two reactions: the carboxylation of D-ribulose 1,5-bisphosphate, the primary event in carbon dioxide fixation, as well as the oxidative fragmentation of the pentose substrate in the photorespiration process. Both reactions occur simultaneously and in competition at the same active site. This is Ribulose bisphosphate carboxylase large chain from Kigelia africana (Sausage tree).